A 306-amino-acid chain; its full sequence is uncharacterized protein (306 aa).

The next 9 membrane-spanning stretches (helical) occupy residues 13 to 33 (VLLS…FAFI), 53 to 73 (PLPM…FAWG), 86 to 106 (ITGL…IWAA), 112 to 132 (VGLT…IVPL), 147 to 167 (WGMM…GMLF), 177 to 197 (AFVS…VIAI), 214 to 234 (AGIA…AWLI), 246 to 268 (VSLI…VTFF), and 272 to 294 (VAVP…GYML).

The protein resides in the cell membrane. This is an uncharacterized protein from Bacillus subtilis (strain 168).